A 206-amino-acid chain; its full sequence is LexA repressor (206 aa).

Residues 28–48 constitute a DNA-binding region (H-T-H motif); that stretch reads VREICNAVGLSSTSTVHGHLS. Catalysis depends on for autocatalytic cleavage activity residues serine 128 and lysine 166.

It belongs to the peptidase S24 family. As to quaternary structure, homodimer.

The enzyme catalyses Hydrolysis of Ala-|-Gly bond in repressor LexA.. Its function is as follows. Represses a number of genes involved in the response to DNA damage (SOS response), including recA and lexA. In the presence of single-stranded DNA, RecA interacts with LexA causing an autocatalytic cleavage which disrupts the DNA-binding part of LexA, leading to derepression of the SOS regulon and eventually DNA repair. This is LexA repressor from Ligilactobacillus salivarius (strain UCC118) (Lactobacillus salivarius).